A 173-amino-acid chain; its full sequence is Shikimate kinase 1 (173 aa).

14–19 (GAGKST) contacts ATP. Ser-18 is a binding site for Mg(2+). The substrate site is built by Asp-36, Arg-60, and Gly-82. Arg-120 lines the ATP pocket. Arg-140 is a substrate binding site. Gln-157 lines the ATP pocket.

It belongs to the shikimate kinase family. As to quaternary structure, monomer. Mg(2+) is required as a cofactor.

It localises to the cytoplasm. It carries out the reaction shikimate + ATP = 3-phosphoshikimate + ADP + H(+). It participates in metabolic intermediate biosynthesis; chorismate biosynthesis; chorismate from D-erythrose 4-phosphate and phosphoenolpyruvate: step 5/7. Its function is as follows. Catalyzes the specific phosphorylation of the 3-hydroxyl group of shikimic acid using ATP as a cosubstrate. This Yersinia pseudotuberculosis serotype O:1b (strain IP 31758) protein is Shikimate kinase 1.